We begin with the raw amino-acid sequence, 95 residues long: Aspartyl/glutamyl-tRNA(Asn/Gln) amidotransferase subunit C (95 aa).

The protein belongs to the GatC family. Heterotrimer of A, B and C subunits.

The catalysed reaction is L-glutamyl-tRNA(Gln) + L-glutamine + ATP + H2O = L-glutaminyl-tRNA(Gln) + L-glutamate + ADP + phosphate + H(+). It carries out the reaction L-aspartyl-tRNA(Asn) + L-glutamine + ATP + H2O = L-asparaginyl-tRNA(Asn) + L-glutamate + ADP + phosphate + 2 H(+). Functionally, allows the formation of correctly charged Asn-tRNA(Asn) or Gln-tRNA(Gln) through the transamidation of misacylated Asp-tRNA(Asn) or Glu-tRNA(Gln) in organisms which lack either or both of asparaginyl-tRNA or glutaminyl-tRNA synthetases. The reaction takes place in the presence of glutamine and ATP through an activated phospho-Asp-tRNA(Asn) or phospho-Glu-tRNA(Gln). The polypeptide is Aspartyl/glutamyl-tRNA(Asn/Gln) amidotransferase subunit C (Azorhizobium caulinodans (strain ATCC 43989 / DSM 5975 / JCM 20966 / LMG 6465 / NBRC 14845 / NCIMB 13405 / ORS 571)).